The chain runs to 535 residues: GMP synthase [glutamine-hydrolyzing] (535 aa).

The region spanning 4 to 210 (KILILDFGSQ…VHEICHCKPD (207 aa)) is the Glutamine amidotransferase type-1 domain. The Nucleophile role is filled by cysteine 85. Active-site residues include histidine 184 and glutamate 186. The 193-residue stretch at 211–403 (WVMGDYIAEA…LGLPREMVYR (193 aa)) folds into the GMPS ATP-PPase domain. 238–244 (SGGVDSS) contributes to the ATP binding site.

In terms of assembly, homodimer.

The catalysed reaction is XMP + L-glutamine + ATP + H2O = GMP + L-glutamate + AMP + diphosphate + 2 H(+). The protein operates within purine metabolism; GMP biosynthesis; GMP from XMP (L-Gln route): step 1/1. In terms of biological role, catalyzes the synthesis of GMP from XMP. In Polynucleobacter asymbioticus (strain DSM 18221 / CIP 109841 / QLW-P1DMWA-1) (Polynucleobacter necessarius subsp. asymbioticus), this protein is GMP synthase [glutamine-hydrolyzing].